The chain runs to 304 residues: Aspartate carbamoyltransferase catalytic subunit (304 aa).

Carbamoyl phosphate is bound by residues Arg-57 and Thr-58. Lys-85 serves as a coordination point for L-aspartate. Residues Arg-107, His-134, and Gln-137 each coordinate carbamoyl phosphate. The L-aspartate site is built by Arg-167 and Arg-216. Positions 260 and 261 each coordinate carbamoyl phosphate.

It belongs to the aspartate/ornithine carbamoyltransferase superfamily. ATCase family. In terms of assembly, heterododecamer (2C3:3R2) of six catalytic PyrB chains organized as two trimers (C3), and six regulatory PyrI chains organized as three dimers (R2).

The catalysed reaction is carbamoyl phosphate + L-aspartate = N-carbamoyl-L-aspartate + phosphate + H(+). Its pathway is pyrimidine metabolism; UMP biosynthesis via de novo pathway; (S)-dihydroorotate from bicarbonate: step 2/3. Catalyzes the condensation of carbamoyl phosphate and aspartate to form carbamoyl aspartate and inorganic phosphate, the committed step in the de novo pyrimidine nucleotide biosynthesis pathway. This Fusobacterium nucleatum subsp. nucleatum (strain ATCC 25586 / DSM 15643 / BCRC 10681 / CIP 101130 / JCM 8532 / KCTC 2640 / LMG 13131 / VPI 4355) protein is Aspartate carbamoyltransferase catalytic subunit.